Reading from the N-terminus, the 146-residue chain is Globin-2B (146 aa).

Residues 9–146 form the Globin domain; it reads QLTADVKKDL…KLVGVVQAAL (138 aa). His-101 is a heme b binding site.

The protein belongs to the globin family. Homodimer.

The chain is Globin-2B from Anadara trapezia (Sydney cockle).